Here is a 141-residue protein sequence, read N- to C-terminus: MLSPRRTKYRKQHRGRLKGTATRGNRICFGRFALQALEPSWITSRQIEAGRRAMTRYARRGGKLWIRIFPDKSITMRPAETRMGSGKGAPEYWVAVVKPGRILYEMSGVSETVARSAMKIASYKMPIKTQFLVASKDSITV.

The span at 1–17 (MLSPRRTKYRKQHRGRL) shows a compositional bias: basic residues. A disordered region spans residues 1-20 (MLSPRRTKYRKQHRGRLKGT).

Belongs to the universal ribosomal protein uL16 family. In terms of assembly, part of the 50S ribosomal subunit.

The protein localises to the plastid. Its subcellular location is the chloroplast. In Staurastrum punctulatum (Green alga), this protein is Large ribosomal subunit protein uL16c.